The primary structure comprises 259 residues: Sugar fermentation stimulation protein homolog (259 aa).

It belongs to the SfsA family.

The protein is Sugar fermentation stimulation protein homolog of Prochlorococcus marinus (strain MIT 9303).